Consider the following 452-residue polypeptide: Tubulin alpha-1 chain (452 aa).

Gln11 lines the GTP pocket. Lys40 carries the post-translational modification N6-acetyllysine. 7 residues coordinate GTP: Glu71, Ser140, Gly144, Thr145, Thr179, Asn206, and Asn228. A Mg(2+)-binding site is contributed by Glu71. The active site involves Glu254. Residues 433-452 (EEVGVDSADAEGEEEEGDEY) are disordered.

This sequence belongs to the tubulin family. In terms of assembly, dimer of alpha and beta chains. A typical microtubule is a hollow water-filled tube with an outer diameter of 25 nm and an inner diameter of 15 nM. Alpha-beta heterodimers associate head-to-tail to form protofilaments running lengthwise along the microtubule wall with the beta-tubulin subunit facing the microtubule plus end conferring a structural polarity. Microtubules usually have 13 protofilaments but different protofilament numbers can be found in some organisms and specialized cells. The cofactor is Mg(2+). Post-translationally, undergoes a tyrosination/detyrosination cycle, the cyclic removal and re-addition of a C-terminal tyrosine residue by the enzymes tubulin tyrosine carboxypeptidase (TTCP) and tubulin tyrosine ligase (TTL), respectively. Acetylation of alpha chains at Lys-40 stabilizes microtubules and affects affinity and processivity of microtubule motors. This modification has a role in multiple cellular functions, ranging from cell motility, cell cycle progression or cell differentiation to intracellular trafficking and signaling.

It localises to the cytoplasm. It is found in the cytoskeleton. It carries out the reaction GTP + H2O = GDP + phosphate + H(+). Functionally, tubulin is the major constituent of microtubules, a cylinder consisting of laterally associated linear protofilaments composed of alpha- and beta-tubulin heterodimers. Microtubules grow by the addition of GTP-tubulin dimers to the microtubule end, where a stabilizing cap forms. Below the cap, tubulin dimers are in GDP-bound state, owing to GTPase activity of alpha-tubulin. The polypeptide is Tubulin alpha-1 chain (Paracentrotus lividus (Common sea urchin)).